Reading from the N-terminus, the 469-residue chain is Glutamate--tRNA ligase (469 aa).

The 'HIGH' region motif lies at 9–19 (PSPTGYLHVGG). 4 residues coordinate Zn(2+): Cys-98, Cys-100, Cys-125, and Asp-127. Residues 237–241 (KLSKR) carry the 'KMSKS' region motif. ATP is bound at residue Lys-240.

This sequence belongs to the class-I aminoacyl-tRNA synthetase family. Glutamate--tRNA ligase type 1 subfamily. In terms of assembly, monomer. It depends on Zn(2+) as a cofactor.

The protein localises to the cytoplasm. It catalyses the reaction tRNA(Glu) + L-glutamate + ATP = L-glutamyl-tRNA(Glu) + AMP + diphosphate. Functionally, catalyzes the attachment of glutamate to tRNA(Glu) in a two-step reaction: glutamate is first activated by ATP to form Glu-AMP and then transferred to the acceptor end of tRNA(Glu). The polypeptide is Glutamate--tRNA ligase (Serratia proteamaculans (strain 568)).